Reading from the N-terminus, the 450-residue chain is Asparagine--tRNA ligase (450 aa).

It belongs to the class-II aminoacyl-tRNA synthetase family. In terms of assembly, homodimer.

The protein localises to the cytoplasm. It carries out the reaction tRNA(Asn) + L-asparagine + ATP = L-asparaginyl-tRNA(Asn) + AMP + diphosphate + H(+). This chain is Asparagine--tRNA ligase, found in Metamycoplasma arthritidis (strain 158L3-1) (Mycoplasma arthritidis).